Consider the following 284-residue polypeptide: uncharacterized protein (284 aa).

Residues 1–24 (MLYSRESRTTVLFLALVTSLTVLC) form the signal peptide. Topologically, residues 25–84 (HSVDVTTVFTTSTITEITTVTAAPQPQNKAETALNTATNIIQTMQFLFNCAPFKWKGPLK) are cytoplasmic. The chain crosses the membrane as a helical span at residues 85–104 (ITSCALNFIVLLLTAWGYLL). At 105-284 (KYLQENKLNS…SVHMYSSSLL (180 aa)) the chain is on the extracellular side. N-linked (GlcNAc...) asparagine glycosylation is present at N270.

It to yeast YNL019c.

The protein localises to the cell membrane. This is an uncharacterized protein from Saccharomyces cerevisiae (strain ATCC 204508 / S288c) (Baker's yeast).